The following is a 115-amino-acid chain: Iron-sulfur cluster insertion protein ErpA (115 aa).

Iron-sulfur cluster is bound by residues cysteine 43, cysteine 107, and cysteine 109.

This sequence belongs to the HesB/IscA family. In terms of assembly, homodimer. Iron-sulfur cluster is required as a cofactor.

Functionally, required for insertion of 4Fe-4S clusters for at least IspG. The sequence is that of Iron-sulfur cluster insertion protein ErpA from Photorhabdus laumondii subsp. laumondii (strain DSM 15139 / CIP 105565 / TT01) (Photorhabdus luminescens subsp. laumondii).